A 444-amino-acid chain; its full sequence is Putative GTP cyclohydrolase URC1 (444 aa).

Position 268–272 (268–272) interacts with GTP; sequence RVHDE. The Zn(2+) site is built by C273, C284, and C286. Position 315–317 (315–317) interacts with GTP; the sequence is EGR. D353 (proton acceptor) is an active-site residue. Catalysis depends on R355, which acts as the Nucleophile. The GTP site is built by S377 and K382.

The protein belongs to the GTP cyclohydrolase II family.

The protein resides in the cytoplasm. The protein localises to the nucleus. Its function is as follows. Involved in uracil catabolism. This chain is Putative GTP cyclohydrolase URC1 (URC1), found in Lachancea kluyveri (Yeast).